Reading from the N-terminus, the 31-residue chain is Cytochrome b6-f complex subunit 6 (31 aa).

A helical transmembrane segment spans residues 4 to 26 (ITSYFGFLLAALTITPALLISLN).

The protein belongs to the PetL family. The 4 large subunits of the cytochrome b6-f complex are cytochrome b6, subunit IV (17 kDa polypeptide, PetD), cytochrome f and the Rieske protein, while the 4 small subunits are PetG, PetL, PetM and PetN. The complex functions as a dimer.

The protein resides in the plastid. Its subcellular location is the chloroplast thylakoid membrane. Its function is as follows. Component of the cytochrome b6-f complex, which mediates electron transfer between photosystem II (PSII) and photosystem I (PSI), cyclic electron flow around PSI, and state transitions. PetL is important for photoautotrophic growth as well as for electron transfer efficiency and stability of the cytochrome b6-f complex. The protein is Cytochrome b6-f complex subunit 6 of Dioscorea elephantipes (Elephant's foot yam).